Reading from the N-terminus, the 35-residue chain is Photosystem II reaction center protein T (35 aa).

The chain crosses the membrane as a helical span at residues A3–F23.

It belongs to the PsbT family. As to quaternary structure, PSII is composed of 1 copy each of membrane proteins PsbA, PsbB, PsbC, PsbD, PsbE, PsbF, PsbH, PsbI, PsbJ, PsbK, PsbL, PsbM, PsbT, PsbY, PsbZ, Psb30/Ycf12, at least 3 peripheral proteins of the oxygen-evolving complex and a large number of cofactors. It forms dimeric complexes.

It localises to the plastid. The protein localises to the chloroplast thylakoid membrane. Found at the monomer-monomer interface of the photosystem II (PS II) dimer, plays a role in assembly and dimerization of PSII. PSII is a light-driven water plastoquinone oxidoreductase, using light energy to abstract electrons from H(2)O, generating a proton gradient subsequently used for ATP formation. The protein is Photosystem II reaction center protein T of Zygnema circumcarinatum (Green alga).